A 109-amino-acid polypeptide reads, in one-letter code: Cell division protein ZapA (109 aa).

A coiled-coil region spans residues 21–97 (PEQQEALNQA…QTIEQALVEQ (77 aa)).

Belongs to the ZapA family. Type 1 subfamily. As to quaternary structure, homodimer. Interacts with FtsZ.

It localises to the cytoplasm. Activator of cell division through the inhibition of FtsZ GTPase activity, therefore promoting FtsZ assembly into bundles of protofilaments necessary for the formation of the division Z ring. It is recruited early at mid-cell but it is not essential for cell division. The sequence is that of Cell division protein ZapA from Sodalis glossinidius (strain morsitans).